We begin with the raw amino-acid sequence, 397 residues long: Elongation factor Tu (397 aa).

Residues 10–206 (KPHVNIGTIG…AVDESIPDPV (197 aa)) form the tr-type G domain. A G1 region spans residues 19–26 (GHVDHGKT). A GTP-binding site is contributed by 19–26 (GHVDHGKT). T26 contacts Mg(2+). The segment at 62–66 (GITIN) is G2. The segment at 83–86 (DAPG) is G3. GTP-binding positions include 83 to 87 (DAPGH) and 138 to 141 (NKSD). Positions 138–141 (NKSD) are G4. A G5 region spans residues 176-178 (SAL).

It belongs to the TRAFAC class translation factor GTPase superfamily. Classic translation factor GTPase family. EF-Tu/EF-1A subfamily. As to quaternary structure, monomer.

The protein localises to the cytoplasm. The enzyme catalyses GTP + H2O = GDP + phosphate + H(+). Functionally, GTP hydrolase that promotes the GTP-dependent binding of aminoacyl-tRNA to the A-site of ribosomes during protein biosynthesis. The chain is Elongation factor Tu from Mycobacteroides abscessus (strain ATCC 19977 / DSM 44196 / CCUG 20993 / CIP 104536 / JCM 13569 / NCTC 13031 / TMC 1543 / L948) (Mycobacterium abscessus).